Here is a 294-residue protein sequence, read N- to C-terminus: ATP phosphoribosyltransferase (294 aa).

This sequence belongs to the ATP phosphoribosyltransferase family. Long subfamily. Mg(2+) serves as cofactor.

The protein localises to the cytoplasm. It catalyses the reaction 1-(5-phospho-beta-D-ribosyl)-ATP + diphosphate = 5-phospho-alpha-D-ribose 1-diphosphate + ATP. It participates in amino-acid biosynthesis; L-histidine biosynthesis; L-histidine from 5-phospho-alpha-D-ribose 1-diphosphate: step 1/9. Its activity is regulated as follows. Feedback inhibited by histidine. In terms of biological role, catalyzes the condensation of ATP and 5-phosphoribose 1-diphosphate to form N'-(5'-phosphoribosyl)-ATP (PR-ATP). Has a crucial role in the pathway because the rate of histidine biosynthesis seems to be controlled primarily by regulation of HisG enzymatic activity. In Chlorobium phaeovibrioides (strain DSM 265 / 1930) (Prosthecochloris vibrioformis (strain DSM 265)), this protein is ATP phosphoribosyltransferase.